The primary structure comprises 549 residues: Serine/threonine-protein phosphatase PPQ (549 aa).

Residues 1–13 (MRRSPSRSNNNFA) show a composition bias toward polar residues. Disordered stretches follow at residues 1–50 (MRRS…RSLP), 64–85 (YNTLASAGKNNNNKRASNDNLL), 133–158 (TSSTTTATTSNNILTSPSYRESNYSS), and 189–219 (SRVKSPSSSVKAGSFGAPSSPTSGIPNPKSS). 2 stretches are compositionally biased toward low complexity: residues 16–32 (NCSTNSNSSQQQLTTPS) and 68–83 (ASAGKNNNNKRASNDN). Over residues 205-217 (APSSPTSGIPNPK) the composition is skewed to polar residues. Residues aspartate 301, histidine 303, aspartate 329, and asparagine 361 each coordinate Mn(2+). The active-site Proton donor is the histidine 362. Mn(2+) is bound by residues histidine 410 and histidine 485.

Belongs to the PPP phosphatase family. PP-Z subfamily. Mn(2+) serves as cofactor.

It carries out the reaction O-phospho-L-seryl-[protein] + H2O = L-seryl-[protein] + phosphate. It catalyses the reaction O-phospho-L-threonyl-[protein] + H2O = L-threonyl-[protein] + phosphate. Its function is as follows. Phosphatase involved in the regulation of protein synthesis. Affects translational accuracy. In Saccharomyces cerevisiae (strain ATCC 204508 / S288c) (Baker's yeast), this protein is Serine/threonine-protein phosphatase PPQ (PPQ1).